The sequence spans 150 residues: Ribonuclease H (150 aa).

The RNase H type-1 domain occupies 2 to 143 (PAPILDIFVD…ADELANRAIE (142 aa)). D11, E49, D71, and D135 together coordinate Mg(2+).

This sequence belongs to the RNase H family. In terms of assembly, monomer. Mg(2+) is required as a cofactor.

It is found in the cytoplasm. It catalyses the reaction Endonucleolytic cleavage to 5'-phosphomonoester.. Functionally, endonuclease that specifically degrades the RNA of RNA-DNA hybrids. This chain is Ribonuclease H, found in Dichelobacter nodosus (strain VCS1703A).